A 75-amino-acid polypeptide reads, in one-letter code: MGSFSIWHWLVVLAIVLLVFGTKRLTSGAKDLGSAVKEFKKGMRDEDKPNAQLGDESRTQDASRTAQDEHDRNAR.

The chain crosses the membrane as a helical span at residues 1-21 (MGSFSIWHWLVVLAIVLLVFG). The segment at 41–75 (KGMRDEDKPNAQLGDESRTQDASRTAQDEHDRNAR) is disordered.

It belongs to the TatA/E family. The Tat system comprises two distinct complexes: a TatABC complex, containing multiple copies of TatA, TatB and TatC subunits, and a separate TatA complex, containing only TatA subunits. Substrates initially bind to the TatABC complex, which probably triggers association of the separate TatA complex to form the active translocon.

The protein resides in the cell inner membrane. Its function is as follows. Part of the twin-arginine translocation (Tat) system that transports large folded proteins containing a characteristic twin-arginine motif in their signal peptide across membranes. TatA could form the protein-conducting channel of the Tat system. The polypeptide is Sec-independent protein translocase protein TatA (Stenotrophomonas maltophilia (strain K279a)).